The sequence spans 356 residues: Dihydroorotate dehydrogenase (quinone) (356 aa).

FMN is bound by residues Ala68–Lys72 and Thr92. A substrate-binding site is contributed by Lys72. Substrate is bound at residue Asn117–Phe121. The FMN site is built by Asn145 and Asn178. Position 178 (Asn178) interacts with substrate. Ser181 acts as the Nucleophile in catalysis. Asn183 provides a ligand contact to substrate. Residues Lys214 and Thr242 each contribute to the FMN site. Asn243–Thr244 is a substrate binding site. FMN-binding positions include Gly266, Gly295, and Tyr316–Thr317.

This sequence belongs to the dihydroorotate dehydrogenase family. Type 2 subfamily. Monomer. The cofactor is FMN.

It is found in the cell membrane. The enzyme catalyses (S)-dihydroorotate + a quinone = orotate + a quinol. Its pathway is pyrimidine metabolism; UMP biosynthesis via de novo pathway; orotate from (S)-dihydroorotate (quinone route): step 1/1. Functionally, catalyzes the conversion of dihydroorotate to orotate with quinone as electron acceptor. The protein is Dihydroorotate dehydrogenase (quinone) of Mycobacterium sp. (strain KMS).